A 785-amino-acid polypeptide reads, in one-letter code: Ubiquitin carboxyl-terminal hydrolase 10 (785 aa).

Composition is skewed to polar residues over residues 113 to 122 and 262 to 277; these read LTLDSGSNAE and DTTE…TLES. Disordered regions lie at residues 113–145 and 262–314; these read LTLD…PPGY and DTTE…ATAT. Basic and acidic residues predominate over residues 290-304; it reads HTVESTDSDQAKPEE. The span at 305–314 shows a compositional bias: low complexity; it reads ASPTTEATAT. Residues 401 to 782 form the USP domain; that stretch reads RGLINKGNWC…TAYLLYYRRV (382 aa). The active-site Nucleophile is Cys-410. Positions 537 to 581 are disordered; sequence EKLSVSNGPEVQTVREEEEQDEQGEGSEDEWEQVGPRNKSSVTRQ. The span at 552 to 568 shows a compositional bias: acidic residues; it reads EEEEQDEQGEGSEDEWE. The Proton acceptor role is filled by His-736.

Belongs to the peptidase C19 family. USP10 subfamily.

The protein resides in the cytoplasm. Its subcellular location is the nucleus. It carries out the reaction Thiol-dependent hydrolysis of ester, thioester, amide, peptide and isopeptide bonds formed by the C-terminal Gly of ubiquitin (a 76-residue protein attached to proteins as an intracellular targeting signal).. In terms of biological role, hydrolase that can remove conjugated ubiquitin from target proteins such as p53/TP53, RPS2/us5, RPS3/us3, RPS10/eS10, BECN1, SNX3 and CFTR. Acts as an essential regulator of p53/TP53 stability: in unstressed cells, specifically deubiquitinates p53/TP53 in the cytoplasm, leading to counteracts MDM2 action and stabilize p53/TP53. Following DNA damage, translocates to the nucleus and deubiquitinates p53/TP53, leading to regulate the p53/TP53-dependent DNA damage response. Component of a regulatory loop that controls autophagy and p53/TP53 levels. Plays a key role in 40S ribosome subunit recycling when a ribosome has stalled during translation: acts both by inhibiting formation of stress granules, which store stalled translation pre-initiation complexes, and mediating deubiquitination of 40S ribosome subunits. Deubiquitinates CFTR in early endosomes, enhancing its endocytic recycling. The sequence is that of Ubiquitin carboxyl-terminal hydrolase 10 (USP10) from Gallus gallus (Chicken).